Consider the following 73-residue polypeptide: Translation initiation factor IF-1 (73 aa).

The 72-residue stretch at 1-72 (MAKEDVIEVE…SRGRITYRYR (72 aa)) folds into the S1-like domain.

It belongs to the IF-1 family. As to quaternary structure, component of the 30S ribosomal translation pre-initiation complex which assembles on the 30S ribosome in the order IF-2 and IF-3, IF-1 and N-formylmethionyl-tRNA(fMet); mRNA recruitment can occur at any time during PIC assembly.

Its subcellular location is the cytoplasm. In terms of biological role, one of the essential components for the initiation of protein synthesis. Stabilizes the binding of IF-2 and IF-3 on the 30S subunit to which N-formylmethionyl-tRNA(fMet) subsequently binds. Helps modulate mRNA selection, yielding the 30S pre-initiation complex (PIC). Upon addition of the 50S ribosomal subunit IF-1, IF-2 and IF-3 are released leaving the mature 70S translation initiation complex. The sequence is that of Translation initiation factor IF-1 from Rubrobacter xylanophilus (strain DSM 9941 / JCM 11954 / NBRC 16129 / PRD-1).